The chain runs to 90 residues: Evasin P458 (90 aa).

An N-terminal signal peptide occupies residues 1-24; the sequence is MEVKTFAFLQIAVLIAFSLHSASA. Cystine bridges form between Cys44/Cys63, Cys48/Cys65, and Cys59/Cys76. A glycan (N-linked (GlcNAc...) asparagine) is linked at Asn47.

The protein localises to the secreted. Salivary chemokine-binding protein which binds to host chemokines CXCL1, CXCL2, CXCL3, CXCL5, CXCL6 and CXCL13. This Ixodes ricinus (Common tick) protein is Evasin P458.